The chain runs to 498 residues: NAD(P)H-quinone oxidoreductase subunit 2, chloroplastic (498 aa).

Helical transmembrane passes span 18–38 (LTIL…VIDL), 51–71 (ISMV…GFFT), 87–107 (FFLL…ILCS), 111–131 (LAEF…LSCA), 134–154 (LVTI…LSGY), 168–188 (FLLM…LLYG), 211–231 (IIYL…SLFP), 244–264 (PTPV…ALFT), 278–298 (WHVA…LIAV), 306–326 (MLAF…LSAD), 337–357 (YTFI…LFGL), 379–399 (FSLV…GFFG), 411–431 (GLYS…YYYL), and 470–490 (IAMI…DPII).

It belongs to the complex I subunit 2 family. NDH is composed of at least 16 different subunits, 5 of which are encoded in the nucleus.

The protein localises to the plastid. Its subcellular location is the chloroplast thylakoid membrane. It catalyses the reaction a plastoquinone + NADH + (n+1) H(+)(in) = a plastoquinol + NAD(+) + n H(+)(out). It carries out the reaction a plastoquinone + NADPH + (n+1) H(+)(in) = a plastoquinol + NADP(+) + n H(+)(out). In terms of biological role, NDH shuttles electrons from NAD(P)H:plastoquinone, via FMN and iron-sulfur (Fe-S) centers, to quinones in the photosynthetic chain and possibly in a chloroplast respiratory chain. The immediate electron acceptor for the enzyme in this species is believed to be plastoquinone. Couples the redox reaction to proton translocation, and thus conserves the redox energy in a proton gradient. This Adiantum capillus-veneris (Maidenhair fern) protein is NAD(P)H-quinone oxidoreductase subunit 2, chloroplastic.